A 122-amino-acid polypeptide reads, in one-letter code: Large ribosomal subunit protein uL14c (122 aa).

This sequence belongs to the universal ribosomal protein uL14 family. In terms of assembly, part of the 50S ribosomal subunit.

The protein localises to the plastid. It localises to the chloroplast. Binds to 23S rRNA. This Oltmannsiellopsis viridis (Marine flagellate) protein is Large ribosomal subunit protein uL14c.